Reading from the N-terminus, the 528-residue chain is Folylpolyglutamate synthase (528 aa).

104–107 (GKGG) serves as a coordination point for ATP. Residues serine 134, glutamate 208, and histidine 236 each coordinate Mg(2+). Positions 351 and 365 each coordinate ATP.

This sequence belongs to the folylpolyglutamate synthase family. Requires a monovalent cation as cofactor.

It is found in the mitochondrion inner membrane. The protein resides in the mitochondrion matrix. Its subcellular location is the cytoplasm. The enzyme catalyses (6S)-5,6,7,8-tetrahydrofolyl-(gamma-L-Glu)(n) + L-glutamate + ATP = (6S)-5,6,7,8-tetrahydrofolyl-(gamma-L-Glu)(n+1) + ADP + phosphate + H(+). Its pathway is cofactor biosynthesis; tetrahydrofolylpolyglutamate biosynthesis. Its function is as follows. Catalyzes conversion of folates to polyglutamate derivatives allowing concentration of folate compounds in the cell and the intracellular retention of these cofactors, which are important substrates for most of the folate-dependent enzymes that are involved in one-carbon transfer reactions involved in purine, pyrimidine and amino acid synthesis. This Neurospora crassa (strain ATCC 24698 / 74-OR23-1A / CBS 708.71 / DSM 1257 / FGSC 987) protein is Folylpolyglutamate synthase (met-6).